The chain runs to 506 residues: Ribose import ATP-binding protein RbsA (506 aa).

2 ABC transporter domains span residues 5–237 (VQLI…VGRP) and 249–492 (PFGA…LAIE). ATP is bound at residue 37–44 (GENGAGKS).

It belongs to the ABC transporter superfamily. Ribose importer (TC 3.A.1.2.1) family. In terms of assembly, the complex is composed of an ATP-binding protein (RbsA), two transmembrane proteins (RbsC) and a solute-binding protein (RbsB).

It is found in the cell inner membrane. It catalyses the reaction D-ribose(out) + ATP + H2O = D-ribose(in) + ADP + phosphate + H(+). In terms of biological role, part of the ABC transporter complex RbsABC involved in ribose import. Responsible for energy coupling to the transport system. The sequence is that of Ribose import ATP-binding protein RbsA from Chelativorans sp. (strain BNC1).